Consider the following 300-residue polypeptide: Sulfate adenylyltransferase subunit 2 (300 aa).

The disordered stretch occupies residues Arg-281 to Phe-300.

The protein belongs to the PAPS reductase family. CysD subfamily. Heterodimer composed of CysD, the smaller subunit, and CysN.

The enzyme catalyses sulfate + ATP + H(+) = adenosine 5'-phosphosulfate + diphosphate. It participates in sulfur metabolism; hydrogen sulfide biosynthesis; sulfite from sulfate: step 1/3. In terms of biological role, with CysN forms the ATP sulfurylase (ATPS) that catalyzes the adenylation of sulfate producing adenosine 5'-phosphosulfate (APS) and diphosphate, the first enzymatic step in sulfur assimilation pathway. APS synthesis involves the formation of a high-energy phosphoric-sulfuric acid anhydride bond driven by GTP hydrolysis by CysN coupled to ATP hydrolysis by CysD. The protein is Sulfate adenylyltransferase subunit 2 of Brucella abortus (strain 2308).